Here is a 449-residue protein sequence, read N- to C-terminus: uncharacterized protein (449 aa).

The segment covering 1–11 (MLDAPEQDPVD) has biased composition (acidic residues). The disordered stretch occupies residues 1–33 (MLDAPEQDPVDPGDPASPPHGEAEQPLPGPRWP). Residues 45 to 65 (LLLTALGGLLIAGLVTAIPAV) form a helical membrane-spanning segment. Residues 349 to 449 (QPPVPPPDIP…PGPAEPAPAG (101 aa)) are disordered. The segment covering 365–387 (PPIPLQLPTPRPAPPAQQLPSTP) has biased composition (pro residues). Low complexity predominate over residues 409–418 (HAPASAAPAE). The span at 437–449 (ATPPGPAEPAPAG) shows a compositional bias: pro residues.

It is found in the cell membrane. It localises to the secreted. May play a role in septum formation. This is an uncharacterized protein from Mycobacterium tuberculosis (strain CDC 1551 / Oshkosh).